A 1114-amino-acid chain; its full sequence is Hephaestin-like protein (1114 aa).

The signal sequence occupies residues 1 to 26; that stretch reads MMDRSNAAFVLTACFIFSQLICHVAA. Plastocyanin-like domains lie at 27 to 210, 218 to 365, 380 to 562, 572 to 719, 730 to 915, and 924 to 1114; these read ITRT…LICR, QQSG…VTKC, KRTY…LLTC, TRKD…VNTC, KTRD…LIIC, and TEER…LLKA. Over 27 to 1091 the chain is Extracellular; it reads ITRTYYIAAV…KTTPKPITAA (1065 aa). An N-linked (GlcNAc...) asparagine glycan is attached at N121. The Cu cation site is built by H129, H131, H189, and H191. The cysteines at positions 183 and 209 are disulfide-linked. N-linked (GlcNAc...) asparagine glycosylation occurs at N236. An intrachain disulfide couples C284 to C365. H303, C346, and H351 together coordinate Cu cation. 3 N-linked (GlcNAc...) asparagine glycosylation sites follow: N361, N478, and N489. Cystine bridges form between C536/C562 and C638/C719. The Cu cation site is built by H657, C700, H705, and M710. Residue N831 is glycosylated (N-linked (GlcNAc...) asparagine). C889 and C915 are oxidised to a cystine. An N-linked (GlcNAc...) asparagine glycan is attached at N944. 8 residues coordinate Cu cation: H1014, H1017, H1019, H1059, C1060, H1061, H1065, and M1070. Residues 1092–1112 form a helical membrane-spanning segment; sequence SSFVTSSIFIYLSFPVLAMLL. Residues 1113–1114 are Cytoplasmic-facing; sequence KA.

This sequence belongs to the multicopper oxidase family. Requires Cu cation as cofactor. As to expression, component of the acid-insoluble and acid-soluble organic matrix of the aragonitic skeleton (at protein level).

Its subcellular location is the membrane. In terms of biological role, may function as a ferroxidase and may be involved in copper transport and homeostasis. This is Hephaestin-like protein from Acropora millepora (Staghorn coral).